Here is a 308-residue protein sequence, read N- to C-terminus: Elongation factor Ts (308 aa).

The interval 80 to 83 (TDFV) is involved in Mg(2+) ion dislocation from EF-Tu.

The protein belongs to the EF-Ts family.

The protein localises to the cytoplasm. Associates with the EF-Tu.GDP complex and induces the exchange of GDP to GTP. It remains bound to the aminoacyl-tRNA.EF-Tu.GTP complex up to the GTP hydrolysis stage on the ribosome. This is Elongation factor Ts from Sphingopyxis alaskensis (strain DSM 13593 / LMG 18877 / RB2256) (Sphingomonas alaskensis).